We begin with the raw amino-acid sequence, 355 residues long: Methylthioribose-1-phosphate isomerase (355 aa).

Substrate contacts are provided by residues 50–52 (RGA), R93, and Q198. Residue D239 is the Proton donor of the active site. A substrate-binding site is contributed by 249–250 (NK).

This sequence belongs to the eIF-2B alpha/beta/delta subunits family. MtnA subfamily. As to quaternary structure, homodimer.

It carries out the reaction 5-(methylsulfanyl)-alpha-D-ribose 1-phosphate = 5-(methylsulfanyl)-D-ribulose 1-phosphate. It participates in amino-acid biosynthesis; L-methionine biosynthesis via salvage pathway; L-methionine from S-methyl-5-thio-alpha-D-ribose 1-phosphate: step 1/6. Its function is as follows. Catalyzes the interconversion of methylthioribose-1-phosphate (MTR-1-P) into methylthioribulose-1-phosphate (MTRu-1-P). This chain is Methylthioribose-1-phosphate isomerase, found in Geobacillus kaustophilus (strain HTA426).